A 546-amino-acid polypeptide reads, in one-letter code: Glucose-6-phosphate isomerase (546 aa).

Residue Glu353 is the Proton donor of the active site. Active-site residues include His384 and Lys512.

It belongs to the GPI family.

The protein resides in the cytoplasm. The catalysed reaction is alpha-D-glucose 6-phosphate = beta-D-fructose 6-phosphate. Its pathway is carbohydrate biosynthesis; gluconeogenesis. It participates in carbohydrate degradation; glycolysis; D-glyceraldehyde 3-phosphate and glycerone phosphate from D-glucose: step 2/4. Catalyzes the reversible isomerization of glucose-6-phosphate to fructose-6-phosphate. The sequence is that of Glucose-6-phosphate isomerase from Actinobacillus pleuropneumoniae serotype 5b (strain L20).